We begin with the raw amino-acid sequence, 416 residues long: Elongation factor 1-gamma 3 (416 aa).

A GST N-terminal domain is found at 1–82; sequence MALVLHCGSG…YVARLKDNSS (82 aa). The 129-residue stretch at 87-215 folds into the GST C-terminal domain; the sequence is SLIDYSHIEQ…FKQAESVPPV (129 aa). Positions 213–263 are disordered; sequence PPVQKKAAPPKESKAKEAKKEAPKEAPKPKVEASEEEEAPKPKPKNPLDLL. The segment covering 221–245 has biased composition (basic and acidic residues); that stretch reads PPKESKAKEAKKEAPKEAPKPKVEA. Residues 256–416 enclose the EF-1-gamma C-terminal domain; sequence PKNPLDLLPP…EDLLDAKCFK (161 aa).

In terms of assembly, EF-1 is composed of four subunits: alpha, beta, delta, and gamma.

Probably plays a role in anchoring the complex to other cellular components. This chain is Elongation factor 1-gamma 3, found in Oryza sativa subsp. japonica (Rice).